Here is a 383-residue protein sequence, read N- to C-terminus: Gamma-butyrobetaine dioxygenase (383 aa).

Residues Cys-46, Cys-48, Cys-51, and His-91 each contribute to the Zn(2+) site. The Fe cation site is built by His-209, Asp-211, and His-350.

The protein belongs to the gamma-BBH/TMLD family. As to quaternary structure, homodimer. It depends on Fe(2+) as a cofactor. The cofactor is L-ascorbate.

It is found in the cytoplasm. The catalysed reaction is 4-(trimethylamino)butanoate + 2-oxoglutarate + O2 = carnitine + succinate + CO2. It functions in the pathway amine and polyamine biosynthesis; carnitine biosynthesis. Functionally, catalyzes the formation of L-carnitine from gamma-butyrobetaine. The polypeptide is Gamma-butyrobetaine dioxygenase (Pseudomonas sp. (strain AK-1)).